We begin with the raw amino-acid sequence, 416 residues long: PDZ and LIM domain protein 7 (416 aa).

Positions methionine 1–glutamine 85 constitute a PDZ domain. Disordered stretches follow at residues cysteine 145–proline 191 and threonine 202–arginine 221. Residues proline 168–proline 181 are compositionally biased toward low complexity. LIM zinc-binding domains are found at residues proline 239–alanine 297, proline 298–threonine 357, and lysine 358–valine 416.

In terms of assembly, interacts with various PKC isoforms through the LIM zinc-binding domains. Interacts with TPM2. Interacts with TBX4 and TBX5.

It is found in the cytoplasm. It localises to the cytoskeleton. The protein resides in the myofibril. The protein localises to the sarcomere. Its subcellular location is the z line. Its function is as follows. May function as a scaffold on which the coordinated assembly of proteins can occur. May play a role as an adapter that, via its PDZ domain, localizes LIM-binding proteins to actin filaments of both skeletal muscle and nonmuscle tissues. May be involved in bone formation. This Gallus gallus (Chicken) protein is PDZ and LIM domain protein 7 (PDLIM7).